Here is an 810-residue protein sequence, read N- to C-terminus: F-BAR domain only protein 2 (810 aa).

Residues 3–250 (MAYFVENFWG…NMANTTVESL (248 aa)) enclose the F-BAR domain. Residues 3 to 274 (MAYFVENFWG…PGLIEFEECD (272 aa)) form a mediates dimerization and binding to membranes enriched in Pi(4,5)-P2 and induces their tubulation region. A coiled-coil region spans residues 87–156 (HLDLVRKLQE…CVEQERLKKE (70 aa)). Residue K297 forms a Glycyl lysine isopeptide (Lys-Gly) (interchain with G-Cter in SUMO2) linkage. The segment at 301 to 352 (DAESVECPDADSLNIPDVDEEGYSIKPETNQNDTKENHFYSSSDSDSEDEEP) is disordered. At S312 the chain carries Phosphoserine. T385 carries the phosphothreonine modification. A phosphoserine mark is found at S387, S394, and S403. The interval 403–537 (SNEELTKSKP…VSRGPSPVSL (135 aa)) is disordered. Low complexity predominate over residues 433–456 (PSLDSSSSSSLTSSSSARPTTPLS). 7 positions are modified to phosphoserine: S488, S493, S496, S508, S510, S511, and S533. Over residues 502–521 (PLARAESSSSISSSASLSAA) the composition is skewed to low complexity. Residues 521–810 (ANTPTVGVSR…FATGRYLADC (290 aa)) are mediates interaction with DAB2, EPS15, EPS15R and ITSN1. One can recognise an MHD domain in the interval 542–809 (TLPVAVALTE…RFATGRYLAD (268 aa)).

This sequence belongs to the FCHO family. In terms of assembly, homodimer; disulfide-linked. May form homotetramer. Interacts with AP2A1. Interacts with EPS15, EPS15R, ITSN1 and ITSN2; recruit those scaffolding proteins which in turn may interact with the adaptor protein complex AP-2 at the plasma membrane. Interacts with DAB2 (via DPF motifs); mediates LDL receptor/LDLR endocytosis. In terms of processing, ubiquitinated. Mainly undergoes monoubiquitination but also polyubiquitination.

Its subcellular location is the membrane. It localises to the clathrin-coated pit. Its function is as follows. Functions in an early step of clathrin-mediated endocytosis. Has both a membrane binding/bending activity and the ability to recruit proteins essential to the formation of functional clathrin-coated pits. Has a lipid-binding activity with a preference for membranes enriched in phosphatidylserine and phosphoinositides (Pi(4,5) biphosphate) like the plasma membrane. Its membrane-bending activity might be important for the subsequent action of clathrin and adaptors in the formation of clathrin-coated vesicles. Involved in adaptor protein complex AP-2-dependent endocytosis of the transferrin receptor, it also functions in the AP-2-independent endocytosis of the LDL receptor. The protein is F-BAR domain only protein 2 (FCHO2) of Pongo abelii (Sumatran orangutan).